The sequence spans 300 residues: GTPase Era (300 aa).

Positions 4 to 172 (KSGFVALAGK…LEKIKEELPE (169 aa)) constitute an Era-type G domain. The G1 stretch occupies residues 12-19 (GKPNVGKS). Residue 12 to 19 (GKPNVGKS) participates in GTP binding. Positions 38–42 (QTTRN) are G2. Residues 59-62 (DTPG) are G3. GTP is bound by residues 59 to 63 (DTPGI) and 121 to 124 (NKID). The tract at residues 121-124 (NKID) is G4. Residues 151-153 (ISA) form a G5 region. A KH type-2 domain is found at 195-280 (IREKIFHLTR…YLDLNVKVKE (86 aa)).

It belongs to the TRAFAC class TrmE-Era-EngA-EngB-Septin-like GTPase superfamily. Era GTPase family. As to quaternary structure, monomer.

The protein resides in the cytoplasm. Its subcellular location is the cell inner membrane. Its function is as follows. An essential GTPase that binds both GDP and GTP, with rapid nucleotide exchange. Plays a role in 16S rRNA processing and 30S ribosomal subunit biogenesis and possibly also in cell cycle regulation and energy metabolism. In Thermotoga petrophila (strain ATCC BAA-488 / DSM 13995 / JCM 10881 / RKU-1), this protein is GTPase Era.